The sequence spans 101 residues: Small ribosomal subunit protein uS10 (101 aa).

The protein belongs to the universal ribosomal protein uS10 family. As to quaternary structure, part of the 30S ribosomal subunit.

In terms of biological role, involved in the binding of tRNA to the ribosomes. This chain is Small ribosomal subunit protein uS10, found in Mycobacterium bovis (strain ATCC BAA-935 / AF2122/97).